The following is a 355-amino-acid chain: Cobalt-precorrin-5B C(1)-methyltransferase (355 aa).

Belongs to the CbiD family.

The enzyme catalyses Co-precorrin-5B + S-adenosyl-L-methionine = Co-precorrin-6A + S-adenosyl-L-homocysteine. Its pathway is cofactor biosynthesis; adenosylcobalamin biosynthesis; cob(II)yrinate a,c-diamide from sirohydrochlorin (anaerobic route): step 6/10. In terms of biological role, catalyzes the methylation of C-1 in cobalt-precorrin-5B to form cobalt-precorrin-6A. In Sulfolobus acidocaldarius (strain ATCC 33909 / DSM 639 / JCM 8929 / NBRC 15157 / NCIMB 11770), this protein is Cobalt-precorrin-5B C(1)-methyltransferase.